A 395-amino-acid chain; its full sequence is Enolase (395 aa).

Positions 136 and 145 each coordinate substrate. The active-site Proton donor is the Glu-188. 3 residues coordinate Mg(2+): Asp-223, Glu-271, and Asp-296. Glu-271 and Asp-296 together coordinate substrate. Residue Lys-321 is the Proton acceptor of the active site. Residues 348 to 351 (SHRS) and Lys-372 each bind substrate.

The protein belongs to the enolase family. As to quaternary structure, homodimer. Mg(2+) serves as cofactor.

It localises to the cytoplasm. The catalysed reaction is (2R)-2-phosphoglycerate = phosphoenolpyruvate + H2O. It functions in the pathway carbohydrate degradation; glycolysis; pyruvate from D-glyceraldehyde 3-phosphate: step 4/5. In Alligator mississippiensis (American alligator), this protein is Enolase.